A 197-amino-acid chain; its full sequence is Dephospho-CoA kinase (197 aa).

In terms of domain architecture, DPCK spans 2 to 197 (IIGLTGGIAS…GAIKDLANLV (196 aa)). 10–15 (ASGKST) contacts ATP.

The protein belongs to the CoaE family.

The protein resides in the cytoplasm. It carries out the reaction 3'-dephospho-CoA + ATP = ADP + CoA + H(+). The protein operates within cofactor biosynthesis; coenzyme A biosynthesis; CoA from (R)-pantothenate: step 5/5. In terms of biological role, catalyzes the phosphorylation of the 3'-hydroxyl group of dephosphocoenzyme A to form coenzyme A. This is Dephospho-CoA kinase from Streptococcus thermophilus (strain ATCC BAA-250 / LMG 18311).